The primary structure comprises 228 residues: Clathrin light chain B (228 aa).

A Blocked amino end (Met) modification is found at Met-1. Over residues 1-17 (MADDFGFFSSSESGAPE) the composition is skewed to low complexity. Residues 1–80 (MADDFGFFSS…VNGDVFQEAN (80 aa)) are disordered. Phosphoserine occurs at positions 11 and 13. The interval 92-154 (ADRLTQEPES…QVEKNKINNR (63 aa)) is involved in binding clathrin heavy chain. Thr-186 is modified (phosphothreonine). Residues Cys-198 and Cys-208 are joined by a disulfide bond. Lys-203 is modified (N6-acetyllysine). Ser-216 carries the post-translational modification Phosphoserine.

This sequence belongs to the clathrin light chain family. Clathrin coats are formed from molecules containing 3 heavy chains and 3 light chains. Interacts (via N-terminus) with HIP1. Interacts with HIP1R.

It is found in the cytoplasmic vesicle membrane. The protein resides in the membrane. Its subcellular location is the coated pit. In terms of biological role, clathrin is the major protein of the polyhedral coat of coated pits and vesicles. This is Clathrin light chain B (CLTB) from Bos taurus (Bovine).